Here is a 309-residue protein sequence, read N- to C-terminus: 15-cis-phytoene synthase (309 aa).

Residues 290–309 (LTSRMRAHPPRPAHLWQRPL) are disordered.

It belongs to the phytoene/squalene synthase family. Requires ATP as cofactor. It depends on Mn(2+) as a cofactor. Mg(2+) is required as a cofactor.

The enzyme catalyses 2 (2E,6E,10E)-geranylgeranyl diphosphate = 15-cis-phytoene + 2 diphosphate. The protein operates within carotenoid biosynthesis; phytoene biosynthesis. Inhibited by phosphate ions and squalestatin. Its function is as follows. Involved in the biosynthesis of carotenoids. Catalyzes the condensation of two molecules of geranylgeranyl diphosphate (GGPP) to give prephytoene diphosphate (PPPP) and the subsequent rearrangement of the cyclopropylcarbinyl intermediate to yield the 15-cis-phytoene isomer. This chain is 15-cis-phytoene synthase (crtB), found in Pantoea ananas (Erwinia uredovora).